We begin with the raw amino-acid sequence, 563 residues long: MRASQYFIPTLKEAPAEAEVPSHIYLIRAGFIRQLAAGLYEYLPLGFRVLKKIEGIIRKYMDDAGALEVLLPILAPAELWQETGRWDVYGKELFRVEDRKGRFFALGPTHEETITDLVRKNIRSYKDLPKNFYQIQTKFRDEARPRYGLIRGREFIMKDAYSFDISEEMAVKSYEIMKEAYKKIFDELGLDYLMVEADVGAIGGKYSHEFVVKVPNGEAHIVFCDNCGYAANVEAAKYEFELDKLPPEDEKPLEKVHTPGVSSVEDVSRFLDINQKKIVKTLVYILDDGTAVAVLIRGDRELNETKLINYFKALDCHLASSEELKDLGIVEGFVGPMGLDIPVYADISVKDLHNFVVGANEEDYHYINVNIPRDFKPVDFVDFSTAREGDPCPVCKKPLNETTGLEVGHIFLLGTKYSEALKAYFVDKDGREKPIVMGCYGIGVSRLMAAAVEQSHDENGIIWPENIAPFKLHILALNIKDDQIKTVAEDIYTKAKEKGIEVLFDDRDISPGAKFKDADLIGIPYRIVVGRGVKNGKVEIQTRKDGKKEEIDINEIDNFLDRL.

It belongs to the class-II aminoacyl-tRNA synthetase family. ProS type 1 subfamily. In terms of assembly, homodimer.

The protein localises to the cytoplasm. It catalyses the reaction tRNA(Pro) + L-proline + ATP = L-prolyl-tRNA(Pro) + AMP + diphosphate. Its function is as follows. Catalyzes the attachment of proline to tRNA(Pro) in a two-step reaction: proline is first activated by ATP to form Pro-AMP and then transferred to the acceptor end of tRNA(Pro). As ProRS can inadvertently accommodate and process non-cognate amino acids such as alanine and cysteine, to avoid such errors it has two additional distinct editing activities against alanine. One activity is designated as 'pretransfer' editing and involves the tRNA(Pro)-independent hydrolysis of activated Ala-AMP. The other activity is designated 'posttransfer' editing and involves deacylation of mischarged Ala-tRNA(Pro). The misacylated Cys-tRNA(Pro) is not edited by ProRS. The sequence is that of Proline--tRNA ligase from Persephonella marina (strain DSM 14350 / EX-H1).